Here is a 133-residue protein sequence, read N- to C-terminus: Small ribosomal subunit protein uS8 (133 aa).

Belongs to the universal ribosomal protein uS8 family. In terms of assembly, part of the 30S ribosomal subunit. Contacts proteins S5 and S12.

Functionally, one of the primary rRNA binding proteins, it binds directly to 16S rRNA central domain where it helps coordinate assembly of the platform of the 30S subunit. The sequence is that of Small ribosomal subunit protein uS8 from Prochlorococcus marinus (strain AS9601).